Here is a 546-residue protein sequence, read N- to C-terminus: MGQKRKDLSHAELMMMTIADIIKQLIEAHEQGKDVNLNKLKTKTSAKYGLSAQPRLVDIIAAVPPQHRKALVPKLKAKPIRTASGIAVVAVMCKPHRCPHINFTGNICVYCPGGPDSDFEYSTQSYTGYEPTSMRAIRARYDPYLQTRHRVEQLKQLGHSVDKVEFIVMGGTFMALPEDYRDYFIRNLHDALSGHTSNNVAEAVKYSERSLTKCVGITIETRPDYCLKRHLSDMLSYGCTRLEIGVQSVYEDVARDTNRGHTVKAVCESFHLAKDAGFKVVAHMMPDLPNMGLERDTDQFVEFFENPAFRPDGMKLYPTLVIRGTGLYELWKTGRYKSYPPSTLVDLVARILALVPPWTRVYRVQRDIPMPLVSSGVEHGNLRELALARMKDLGTQCRDVRTREVGIQEIHHKVRPYQIELIRRDYVANGGWETFLSYEDPEQDILVGLLRLRKCSEESFRPELKGGVSIVRELHVYGSVVPVSSRDPSKFQHQGFGMLLMEEAERIAKEEHGSWKIAVISGVGTRNYYRKIGYELEGPYMVKRLQ.

Residues 81 to 371 form the Radical SAM core domain; sequence RTASGIAVVA…YRVQRDIPMP (291 aa). Positions 98, 108, and 111 each coordinate [4Fe-4S] cluster. Residues Lys163, 473 to 476, 496 to 498, and Tyr529 each bind acetyl-CoA; these read ELHV and FGM. The N-acetyltransferase domain maps to 395 to 546; that stretch reads TQCRDVRTRE…EGPYMVKRLQ (152 aa).

Belongs to the ELP3 family. As to quaternary structure, component of the elongator complex. It depends on [4Fe-4S] cluster as a cofactor.

The protein localises to the cytoplasm. The protein resides in the nucleus. It catalyses the reaction uridine(34) in tRNA + acetyl-CoA + S-adenosyl-L-methionine + H2O = 5-(carboxymethyl)uridine(34) in tRNA + 5'-deoxyadenosine + L-methionine + CoA + 2 H(+). It participates in tRNA modification; 5-methoxycarbonylmethyl-2-thiouridine-tRNA biosynthesis. In terms of biological role, catalytic tRNA acetyltransferase subunit of the elongator complex which is required for multiple tRNA modifications, including mcm5U (5-methoxycarbonylmethyl uridine), mcm5s2U (5-methoxycarbonylmethyl-2-thiouridine), and ncm5U (5-carbamoylmethyl uridine). In the elongator complex, acts as a tRNA uridine(34) acetyltransferase by mediating formation of carboxymethyluridine in the wobble base at position 34 in tRNAs. The protein is Elongator complex protein 3 of Gallus gallus (Chicken).